The following is a 470-amino-acid chain: D-serine/D-alanine/glycine transporter (470 aa).

Helical transmembrane passes span 30 to 50 (LIAIGGAIGTGLFMGSGKTIS), 51 to 71 (LAGPSIIFVYMIIGFMLFFVM), 102 to 122 (FTGWTYWFCWVVTGMADVVAI), 128 to 148 (FWFPGLSDWVASLSVIILLLV), 162 to 182 (FWFAMIKIVAIVSLIVVGLVM), 211 to 231 (LSGFFAGFQIAVFAFVGIELV), 256 to 276 (IIMFYVFSLIVIMSVTPWSSV), 283 to 303 (FVELFVLVGLPAAASVINFVV), 350 to 370 (FSCICLLGGVVMLYVNPSVIG), 371 to 391 (AFTMITTVSAILFMFVWTIIL), 413 to 433 (PLGKLMCWVCMAFFVFVLVLL), and 441 to 461 (QALLVTPLWFIALGLGWLFIG).

It belongs to the amino acid-polyamine-organocation (APC) superfamily. Amino acid transporter (AAT) (TC 2.A.3.1) family.

It is found in the cell inner membrane. It carries out the reaction D-alanine(in) + H(+)(in) = D-alanine(out) + H(+)(out). The catalysed reaction is D-serine(out) + H(+)(out) = D-serine(in) + H(+)(in). The enzyme catalyses glycine(in) + H(+)(in) = glycine(out) + H(+)(out). It catalyses the reaction D-cycloserine(in) + H(+)(in) = D-cycloserine(out) + H(+)(out). With respect to regulation, uptake of D-serine is inhibited by D-alanine, D-cycloserine, glycine and at high concentrations of D-threonine. In terms of biological role, permease that is involved in the transport across the cytoplasmic membrane of D-alanine, D-serine and glycine. Is the only transporter of D-alanine. Transports D-serine less efficiently than DsdX. In addition, in minimal media, transports the broad spectrum antibiotic D-cycloserine into the cell. Transports D-cycloserine only in minimal media, and not in a complex medium, suggesting that CycA does not play a role in D-cycloserine transport when E.coli is grown in a complex or biologically relevant medium, probably due to competition from other CycA substrates present in the medium. The polypeptide is D-serine/D-alanine/glycine transporter (cycA) (Escherichia coli O6:H1 (strain CFT073 / ATCC 700928 / UPEC)).